We begin with the raw amino-acid sequence, 427 residues long: 3-phosphoshikimate 1-carboxyvinyltransferase (427 aa).

3 residues coordinate 3-phosphoshikimate: Lys-22, Ser-23, and Arg-27. Lys-22 contacts phosphoenolpyruvate. Gly-96 and Arg-124 together coordinate phosphoenolpyruvate. Residues Ser-169, Ser-170, Gln-171, Ser-197, Asp-313, Asn-336, and Lys-340 each contribute to the 3-phosphoshikimate site. Gln-171 lines the phosphoenolpyruvate pocket. The Proton acceptor role is filled by Asp-313. Phosphoenolpyruvate contacts are provided by Arg-344, Arg-386, and Lys-411.

This sequence belongs to the EPSP synthase family. As to quaternary structure, monomer.

It is found in the cytoplasm. The catalysed reaction is 3-phosphoshikimate + phosphoenolpyruvate = 5-O-(1-carboxyvinyl)-3-phosphoshikimate + phosphate. Its pathway is metabolic intermediate biosynthesis; chorismate biosynthesis; chorismate from D-erythrose 4-phosphate and phosphoenolpyruvate: step 6/7. Its function is as follows. Catalyzes the transfer of the enolpyruvyl moiety of phosphoenolpyruvate (PEP) to the 5-hydroxyl of shikimate-3-phosphate (S3P) to produce enolpyruvyl shikimate-3-phosphate and inorganic phosphate. This chain is 3-phosphoshikimate 1-carboxyvinyltransferase, found in Salmonella arizonae (strain ATCC BAA-731 / CDC346-86 / RSK2980).